The chain runs to 398 residues: MENETGSELNQTQLQPRAVVALEYQVVTILLVLIICGLGIVGNIMVVLVVMRTKHMRTPTNCYLVSLAVADLMVLVAAGLPNITDSIYGSWVYGYVGCLCITYLQYLGINASSCSITAFTIERYIAICHPIKAQFLCTFSRAKKIIIFVWAFTSIYCMLWFFLLDLNISTYKDAIVVSCGYKISRNYYSPIYLMDFGVFYVVPMILATVLYGFIARILFLNPIPSDPKENSNMWKNDSTHQNKNLNSKTSNRYFNSTVSSRKQVTKMLAVVVILFALLWMPYRTLVVVNSFLSSPFQENWFLLFCRICIYLNSAINPVIYNLMSQKFRAAFRKLCNCKQKPVEKPANYSVALSYSVIKESDRFSTELDDVTVTDTYLSATKVSFDDTCLASEITFNQS.

Topologically, residues 1–28 (MENETGSELNQTQLQPRAVVALEYQVVT) are extracellular. N-linked (GlcNAc...) asparagine glycans are attached at residues N3 and N10. A helical transmembrane segment spans residues 29-51 (ILLVLIICGLGIVGNIMVVLVVM). The Cytoplasmic segment spans residues 52 to 61 (RTKHMRTPTN). Residues 62–83 (CYLVSLAVADLMVLVAAGLPNI) traverse the membrane as a helical segment. Residues 84–99 (TDSIYGSWVYGYVGCL) lie on the Extracellular side of the membrane. Cysteines 98 and 179 form a disulfide. Residues 100–121 (CITYLQYLGINASSCSITAFTI) form a helical membrane-spanning segment. At 122-144 (ERYIAICHPIKAQFLCTFSRAKK) the chain is on the cytoplasmic side. The chain crosses the membrane as a helical span at residues 145–168 (IIIFVWAFTSIYCMLWFFLLDLNI). At 169-193 (STYKDAIVVSCGYKISRNYYSPIYL) the chain is on the extracellular side. A helical transmembrane segment spans residues 194-215 (MDFGVFYVVPMILATVLYGFIA). The Cytoplasmic segment spans residues 216 to 266 (RILFLNPIPSDPKENSNMWKNDSTHQNKNLNSKTSNRYFNSTVSSRKQVTK). The helical transmembrane segment at 267 to 288 (MLAVVVILFALLWMPYRTLVVV) threads the bilayer. Topologically, residues 289-296 (NSFLSSPF) are extracellular. A helical transmembrane segment spans residues 297-319 (QENWFLLFCRICIYLNSAINPVI). Residues 320–398 (YNLMSQKFRA…LASEITFNQS (79 aa)) are Cytoplasmic-facing.

It belongs to the G-protein coupled receptor 1 family.

The protein resides in the cell membrane. In terms of biological role, receptor for thyrotropin-releasing hormone (TRH). Upon ligand binding, this G-protein-coupled receptor triggers activation of the phosphatidylinositol (IP3)-calcium-protein kinase C (PKC) pathway. The polypeptide is Thyrotropin-releasing hormone receptor (TRHR) (Bos taurus (Bovine)).